A 459-amino-acid polypeptide reads, in one-letter code: SLIT-ROBO Rho GTPase-activating protein 2C (459 aa).

In terms of domain architecture, F-BAR spans 22–325 (KEIRAQLTEQ…AVENLDATSD (304 aa)). Positions 181–202 (LKEAEKQEEKQIGKSVKQEDRQ) are enriched in basic and acidic residues. Positions 181–211 (LKEAEKQEEKQIGKSVKQEDRQTPCSPDSTA) are disordered. Residues 363–401 (QSELVQRCQQLQSRLSTLKIENEEVKKTMEATLQTIQDI) adopt a coiled-coil conformation.

In terms of assembly, homodimer. Interacts (via F-BAR domain) with SRGAP2/SRGAP2A (via F-BAR domain); formation of the heterodimer inhibits SRGAP2/SRGAP2A function. As to expression, ubiquitously expressed with higher expression in cerebellum. Probably expressed in fetal and adult neurons (at protein level).

Functionally, human-specific protein that acts as a key modifier of cortical connectivity in the human brain. Acts by inhibiting the functions of ancestral paralog SRGAP2/SRGAP2A, a postsynaptic protein that regulates excitatory and inhibitory synapse maturation and density in cortical pyramidal neurons. SRGAP2C is unstable but is able to heterodimerize with SRGAP2/SRGAP2A, thereby reducing SRGAP2/SRGAP2A levels through proteasome-dependent degradation. Inhibition of SRGAP2/SRGAP2A by SRGAP2C leads to an increase in synaptic density and protracted synaptic maturation of both excitatory and inhibitory synapses. Modifies cortical circuit connectivity by increasing the number of local and long-range cortical inputs received by layer 2/3 pyramidal neurons. Also able to increase the probability of sensory-evoked responses by layer 2/3 pyramidal neurons. This Homo sapiens (Human) protein is SLIT-ROBO Rho GTPase-activating protein 2C.